A 686-amino-acid polypeptide reads, in one-letter code: DNA ligase (686 aa).

Residues 31–35 (DSEYD), 80–81 (SL), and Glu109 each bind NAD(+). Lys111 serves as the catalytic N6-AMP-lysine intermediate. 4 residues coordinate NAD(+): Arg132, Glu166, Lys280, and Lys304. Residues Cys430, Cys433, Cys448, and Cys453 each coordinate Zn(2+). The BRCT domain occupies 611–686 (NVEGILSGKT…IWSEQDLLDL (76 aa)).

This sequence belongs to the NAD-dependent DNA ligase family. LigA subfamily. Mg(2+) serves as cofactor. Mn(2+) is required as a cofactor.

The catalysed reaction is NAD(+) + (deoxyribonucleotide)n-3'-hydroxyl + 5'-phospho-(deoxyribonucleotide)m = (deoxyribonucleotide)n+m + AMP + beta-nicotinamide D-nucleotide.. DNA ligase that catalyzes the formation of phosphodiester linkages between 5'-phosphoryl and 3'-hydroxyl groups in double-stranded DNA using NAD as a coenzyme and as the energy source for the reaction. It is essential for DNA replication and repair of damaged DNA. The polypeptide is DNA ligase (Lactococcus lactis subsp. cremoris (strain SK11)).